The sequence spans 186 residues: MPTPGTGSVPELQLVPFQLGHFPILQRWFATEKELVQWAGPALRHPLSLEQMHEDLAESRRRPPLRLLWSACRDDQVIGHCQLLFDRRNGVVRLARIVLAPSARGQGLGLPMLEALLAEAFADADIERVELNVYDWNAAARHLYRRAGFREEGLRRSATRVGRERWNVVLMGLLRQEWAAGGAGND.

The N-acetyltransferase domain maps to 12–176 (LQLVPFQLGH…NVVLMGLLRQ (165 aa)). CoA is bound by residues Gln-37, 97-99 (IVL), Gly-105, Asn-137, and 142-144 (HLY).

Homodimer.

In terms of biological role, catalyzes the transfer of an acetyl group from acetyl coenzyme A (AcCoA) to an acceptor substrate and releases both CoA and the acetylated product. It prefers the antibiotic chloramphenicol. The sequence is that of Acetyltransferase PA2578 from Pseudomonas aeruginosa (strain ATCC 15692 / DSM 22644 / CIP 104116 / JCM 14847 / LMG 12228 / 1C / PRS 101 / PAO1).